A 344-amino-acid chain; its full sequence is HTH-type transcriptional regulator XC_2801 (344 aa).

The HTH lysR-type domain maps to 3–60 (HDLNDTLIFVKVVEQGSFIAAANSLGLPKTTVSRKVQELETRLGARLLHRTTRRIGLT). Residues 20 to 39 (FIAAANSLGLPKTTVSRKVQ) constitute a DNA-binding region (H-T-H motif).

It belongs to the LysR transcriptional regulatory family. Interacts with the cyclic di-GMP effector XC_3703.

With respect to regulation, activity is regulated by cyclic di-GMP. Cyclic di-GMP specifically binds to XC_3703, which inhibits the interaction of the XC_2801-XC_3703 complex with DNA and prevents the transcription of the target genes. Functionally, transcriptional regulator that directly or indirectly regulates the expression of virulence-related genes, including flhB, aaeA, fliL and flgG. Binds to the promoter of the target genes only in the presence of XC_3703. This Xanthomonas campestris pv. campestris (strain 8004) protein is HTH-type transcriptional regulator XC_2801.